The primary structure comprises 339 residues: Coproporphyrin III ferrochelatase (339 aa).

Positions 52 and 121 each coordinate Fe-coproporphyrin III. Residues His181 and Glu264 each contribute to the Fe(2+) site.

This sequence belongs to the ferrochelatase family.

It is found in the cytoplasm. The catalysed reaction is Fe-coproporphyrin III + 2 H(+) = coproporphyrin III + Fe(2+). The protein operates within porphyrin-containing compound metabolism; protoheme biosynthesis. In terms of biological role, involved in coproporphyrin-dependent heme b biosynthesis. Catalyzes the insertion of ferrous iron into coproporphyrin III to form Fe-coproporphyrin III. In Mycolicibacterium vanbaalenii (strain DSM 7251 / JCM 13017 / BCRC 16820 / KCTC 9966 / NRRL B-24157 / PYR-1) (Mycobacterium vanbaalenii), this protein is Coproporphyrin III ferrochelatase.